The sequence spans 104 residues: NADH-quinone oxidoreductase subunit K (104 aa).

Helical transmembrane passes span 4-24, 31-51, and 67-87; these read VPASAYLTLAIILFCIGLFGA, VIVLVCIELMLNAANLNLVAF, and LFTMAVAAAEAAVGLAILIAL.

This sequence belongs to the complex I subunit 4L family. In terms of assembly, NDH-1 is composed of 14 different subunits. Subunits NuoA, H, J, K, L, M, N constitute the membrane sector of the complex.

The protein resides in the cell membrane. It catalyses the reaction a quinone + NADH + 5 H(+)(in) = a quinol + NAD(+) + 4 H(+)(out). NDH-1 shuttles electrons from NADH, via FMN and iron-sulfur (Fe-S) centers, to quinones in the respiratory chain. The immediate electron acceptor for the enzyme in this species is believed to be a menaquinone. Couples the redox reaction to proton translocation (for every two electrons transferred, four hydrogen ions are translocated across the cytoplasmic membrane), and thus conserves the redox energy in a proton gradient. This is NADH-quinone oxidoreductase subunit K from Bacillus cereus (strain AH820).